Reading from the N-terminus, the 378-residue chain is tRNA-specific 2-thiouridylase MnmA (378 aa).

ATP-binding positions include 7 to 14 and methionine 33; that span reads GLSGGVDS. The interaction with target base in tRNA stretch occupies residues 102-104; the sequence is NPD. The active-site Nucleophile is cysteine 107. Cysteines 107 and 209 form a disulfide. Position 132 (glycine 132) interacts with ATP. An interaction with tRNA region spans residues 159–161; sequence KDQ. The Cysteine persulfide intermediate role is filled by cysteine 209. The segment at 316–317 is interaction with tRNA; the sequence is RY.

Belongs to the MnmA/TRMU family.

It localises to the cytoplasm. The catalysed reaction is S-sulfanyl-L-cysteinyl-[protein] + uridine(34) in tRNA + AH2 + ATP = 2-thiouridine(34) in tRNA + L-cysteinyl-[protein] + A + AMP + diphosphate + H(+). In terms of biological role, catalyzes the 2-thiolation of uridine at the wobble position (U34) of tRNA, leading to the formation of s(2)U34. The chain is tRNA-specific 2-thiouridylase MnmA from Aster yellows witches'-broom phytoplasma (strain AYWB).